Consider the following 252-residue polypeptide: 2-succinyl-6-hydroxy-2,4-cyclohexadiene-1-carboxylate synthase (252 aa).

Belongs to the AB hydrolase superfamily. MenH family. As to quaternary structure, monomer.

The catalysed reaction is 5-enolpyruvoyl-6-hydroxy-2-succinyl-cyclohex-3-ene-1-carboxylate = (1R,6R)-6-hydroxy-2-succinyl-cyclohexa-2,4-diene-1-carboxylate + pyruvate. It functions in the pathway quinol/quinone metabolism; 1,4-dihydroxy-2-naphthoate biosynthesis; 1,4-dihydroxy-2-naphthoate from chorismate: step 3/7. It participates in quinol/quinone metabolism; menaquinone biosynthesis. In terms of biological role, catalyzes a proton abstraction reaction that results in 2,5-elimination of pyruvate from 2-succinyl-5-enolpyruvyl-6-hydroxy-3-cyclohexene-1-carboxylate (SEPHCHC) and the formation of 2-succinyl-6-hydroxy-2,4-cyclohexadiene-1-carboxylate (SHCHC). In Escherichia coli (strain ATCC 8739 / DSM 1576 / NBRC 3972 / NCIMB 8545 / WDCM 00012 / Crooks), this protein is 2-succinyl-6-hydroxy-2,4-cyclohexadiene-1-carboxylate synthase.